The chain runs to 585 residues: Arginine--tRNA ligase (585 aa).

The 'HIGH' region motif lies at 127–137 (PNTNKPLHVGH).

Belongs to the class-I aminoacyl-tRNA synthetase family. Monomer.

Its subcellular location is the cytoplasm. It catalyses the reaction tRNA(Arg) + L-arginine + ATP = L-arginyl-tRNA(Arg) + AMP + diphosphate. The polypeptide is Arginine--tRNA ligase (argS) (Borreliella burgdorferi (strain ATCC 35210 / DSM 4680 / CIP 102532 / B31) (Borrelia burgdorferi)).